The primary structure comprises 156 residues: Ribosomal RNA large subunit methyltransferase H (156 aa).

S-adenosyl-L-methionine contacts are provided by residues leucine 73, glycine 104, and 123–128 (ISSMTL).

Belongs to the RNA methyltransferase RlmH family. Homodimer.

It localises to the cytoplasm. The catalysed reaction is pseudouridine(1915) in 23S rRNA + S-adenosyl-L-methionine = N(3)-methylpseudouridine(1915) in 23S rRNA + S-adenosyl-L-homocysteine + H(+). Its function is as follows. Specifically methylates the pseudouridine at position 1915 (m3Psi1915) in 23S rRNA. The polypeptide is Ribosomal RNA large subunit methyltransferase H (Burkholderia ambifaria (strain ATCC BAA-244 / DSM 16087 / CCUG 44356 / LMG 19182 / AMMD) (Burkholderia cepacia (strain AMMD))).